The chain runs to 235 residues: Large ribosomal subunit protein uL1 (235 aa).

This sequence belongs to the universal ribosomal protein uL1 family. As to quaternary structure, part of the 50S ribosomal subunit.

Its function is as follows. Binds directly to 23S rRNA. The L1 stalk is quite mobile in the ribosome, and is involved in E site tRNA release. Functionally, protein L1 is also a translational repressor protein, it controls the translation of the L11 operon by binding to its mRNA. This Synechococcus sp. (strain CC9605) protein is Large ribosomal subunit protein uL1.